The chain runs to 144 residues: uncharacterized protein (144 aa).

A helical transmembrane segment spans residues 25–47; sequence LTLLDGCCVALVLALTAWSGFFV.

Its subcellular location is the membrane. This is an uncharacterized protein from Treponema pallidum (strain Nichols).